The chain runs to 289 residues: Polyamine aminopropyltransferase (289 aa).

A PABS domain is found at 5–238 (TVWHETLHDQ…GIMTFAWATD (234 aa)). Q33 lines the S-methyl-5'-thioadenosine pocket. Positions 64 and 88 each coordinate spermidine. Residues E108 and 140–141 (DG) contribute to the S-methyl-5'-thioadenosine site. The active-site Proton acceptor is the D158. 158 to 161 (DCTD) is a binding site for spermidine. An S-methyl-5'-thioadenosine-binding site is contributed by P165.

The protein belongs to the spermidine/spermine synthase family. In terms of assembly, homodimer or homotetramer.

It is found in the cytoplasm. The catalysed reaction is S-adenosyl 3-(methylsulfanyl)propylamine + putrescine = S-methyl-5'-thioadenosine + spermidine + H(+). It participates in amine and polyamine biosynthesis; spermidine biosynthesis; spermidine from putrescine: step 1/1. In terms of biological role, catalyzes the irreversible transfer of a propylamine group from the amino donor S-adenosylmethioninamine (decarboxy-AdoMet) to putrescine (1,4-diaminobutane) to yield spermidine. The chain is Polyamine aminopropyltransferase from Enterobacter sp. (strain 638).